A 153-amino-acid polypeptide reads, in one-letter code: Protein E6 (153 aa).

Zinc fingers lie at residues 37 to 73 (CHFC…CIKC) and 110 to 146 (CSEC…CRAC).

It belongs to the papillomaviridae E6 protein family. In terms of assembly, forms homodimers. Interacts with ubiquitin-protein ligase UBE3A/E6-AP; this interaction stimulates UBE3A ubiquitin activity. Interacts with host BAK1.

It is found in the host cytoplasm. It localises to the host nucleus. Plays a major role in the induction and maintenance of cellular transformation. E6 associates with host UBE3A/E6-AP ubiquitin-protein ligase and modulates its activity. Protects host keratinocytes from apoptosis by mediating the degradation of host BAK1. May also inhibit host immune response. The chain is Protein E6 from Micromys minutus papillomavirus (MmPV).